Here is a 209-residue protein sequence, read N- to C-terminus: Uracil phosphoribosyltransferase (209 aa).

Residues Arg-79, Arg-104, and 131 to 139 (DPMLATGGS) each bind 5-phospho-alpha-D-ribose 1-diphosphate. Residues Ile-194 and 199–201 (GDA) each bind uracil. 5-phospho-alpha-D-ribose 1-diphosphate is bound at residue Asp-200.

It belongs to the UPRTase family. As to quaternary structure, homodimer. Requires Mg(2+) as cofactor.

The enzyme catalyses UMP + diphosphate = 5-phospho-alpha-D-ribose 1-diphosphate + uracil. It participates in pyrimidine metabolism; UMP biosynthesis via salvage pathway; UMP from uracil: step 1/1. With respect to regulation, allosterically activated by GTP. Catalyzes the conversion of uracil and 5-phospho-alpha-D-ribose 1-diphosphate (PRPP) to UMP and diphosphate. This is Uracil phosphoribosyltransferase from Bacillus caldolyticus.